Reading from the N-terminus, the 299-residue chain is Probable alpha-L-glutamate ligase (299 aa).

One can recognise an ATP-grasp domain in the interval 111–293 (LQALAAANIA…VATQMIAYLE (183 aa)). ATP contacts are provided by residues Lys147, 184-185 (DF), Asp193, and 217-219 (RAN). The Mg(2+) site is built by Asp254, Glu266, and Asn268. Mn(2+) is bound by residues Asp254, Glu266, and Asn268.

It belongs to the RimK family. Mg(2+) is required as a cofactor. Requires Mn(2+) as cofactor.

The protein is Probable alpha-L-glutamate ligase of Mannheimia succiniciproducens (strain KCTC 0769BP / MBEL55E).